A 298-amino-acid chain; its full sequence is Acetyl-coenzyme A carboxylase carboxyl transferase subunit beta (298 aa).

The interval Met-1–Pro-21 is disordered. Residues Arg-20 to Cys-67 form a C4-type zinc finger. Positions Pro-41–Pro-298 constitute a CoA carboxyltransferase N-terminal domain. 4 residues coordinate Zn(2+): Cys-45, Cys-48, Cys-64, and Cys-67.

The protein belongs to the AccD/PCCB family. In terms of assembly, acetyl-CoA carboxylase is a heterohexamer composed of biotin carboxyl carrier protein (AccB), biotin carboxylase (AccC) and two subunits each of ACCase subunit alpha (AccA) and ACCase subunit beta (AccD). Zn(2+) is required as a cofactor.

Its subcellular location is the cytoplasm. It carries out the reaction N(6)-carboxybiotinyl-L-lysyl-[protein] + acetyl-CoA = N(6)-biotinyl-L-lysyl-[protein] + malonyl-CoA. It participates in lipid metabolism; malonyl-CoA biosynthesis; malonyl-CoA from acetyl-CoA: step 1/1. Component of the acetyl coenzyme A carboxylase (ACC) complex. Biotin carboxylase (BC) catalyzes the carboxylation of biotin on its carrier protein (BCCP) and then the CO(2) group is transferred by the transcarboxylase to acetyl-CoA to form malonyl-CoA. This is Acetyl-coenzyme A carboxylase carboxyl transferase subunit beta from Acinetobacter baumannii (strain SDF).